Here is a 426-residue protein sequence, read N- to C-terminus: Enolase (426 aa).

Position 41 (Gly41) interacts with phosphoenolpyruvate. Ser43 is a binding site for Mg(2+). Glu165 provides a ligand contact to phosphoenolpyruvate. (2R)-2-phosphoglycerate-binding residues include Glu165 and Glu206. The active-site Proton donor is the Glu206. Mg(2+)-binding residues include Asp243, Glu286, and Asp313. Residues Asp313, Lys338, Arg367, Ser368, and Lys389 each coordinate phosphoenolpyruvate. Positions 338, 367, and 368 each coordinate (2R)-2-phosphoglycerate. Lys338 serves as the catalytic Proton acceptor.

This sequence belongs to the enolase family. As to quaternary structure, homodimer. Requires Mg(2+) as cofactor.

The protein localises to the cytoplasm. It localises to the secreted. It is found in the cell surface. It catalyses the reaction (2R)-2-phosphoglycerate = phosphoenolpyruvate + H2O. Its pathway is carbohydrate degradation; glycolysis; pyruvate from D-glyceraldehyde 3-phosphate: step 4/5. In terms of biological role, catalyzes the reversible conversion of 2-phosphoglycerate (2-PG) into phosphoenolpyruvate (PEP). It is essential for the degradation of carbohydrates via glycolysis. In Chloroflexus aurantiacus (strain ATCC 29366 / DSM 635 / J-10-fl), this protein is Enolase.